The chain runs to 213 residues: 3-demethoxyubiquinol 3-hydroxylase (213 aa).

Fe cation contacts are provided by E62, E92, H95, E144, E176, and H179.

This sequence belongs to the COQ7 family. Fe cation is required as a cofactor.

The protein localises to the cell membrane. It catalyses the reaction a 5-methoxy-2-methyl-3-(all-trans-polyprenyl)benzene-1,4-diol + AH2 + O2 = a 3-demethylubiquinol + A + H2O. The protein operates within cofactor biosynthesis; ubiquinone biosynthesis. In terms of biological role, catalyzes the hydroxylation of 2-nonaprenyl-3-methyl-6-methoxy-1,4-benzoquinol during ubiquinone biosynthesis. The sequence is that of 3-demethoxyubiquinol 3-hydroxylase from Legionella pneumophila (strain Paris).